Reading from the N-terminus, the 645-residue chain is Matrix metalloproteinase-24 (645 aa).

The segment covering 1–10 (MPRSRGGRAA) has biased composition (low complexity). The tract at residues 1 to 26 (MPRSRGGRAAPGPPPPPPPPGQAPRW) is disordered. The N-terminal stretch at 1–52 (MPRSRGGRAAPGPPPPPPPPGQAPRWSRWRVPGRLLLLLLPALCCLPGAARA) is a signal peptide. Positions 11-22 (PGPPPPPPPPGQ) are enriched in pro residues. Residues 53 to 155 (AAAAAGAGNR…HLSRRRRNKR (103 aa)) constitute a propeptide that is removed on maturation. Residues 53-602 (AAAAAGAGNR…INDVPGSVNA (550 aa)) are Extracellular-facing. The short motif at 137–144 (PRCGVPDH) is the Cysteine switch element. Cys139 and His282 together coordinate Zn(2+). Glu283 is a catalytic residue. Zn(2+) contacts are provided by His286 and His292. The disordered stretch occupies residues 323–380 (QKIYGPPAEPLEPTRPLPTLPVRRIHSPSERKHERQPRPPRPPLGDRPSTPGTKPNIC). Positions 329–341 (PAEPLEPTRPLPT) are enriched in pro residues. Residues 349–359 (SPSERKHERQP) show a composition bias toward basic and acidic residues. Hemopexin repeat units lie at residues 377–425 (PNIC…WKGL), 426–471 (PARI…GSCL), 473–521 (REGI…KGIP), and 522–569 (QAPQ…WMGC). A disulfide bridge links Cys380 with Cys569. Residues 603-623 (VAVVIPCILSLCILVLVYTIF) form a helical membrane-spanning segment. The Cytoplasmic segment spans residues 624–645 (QFKNKTGPQPVTYYKRPVQEWV). The short motif at 643-645 (EWV) is the PDZ-binding element.

This sequence belongs to the peptidase M10A family. As to quaternary structure, interacts (via PDZ-binding motif) with APBA3 (via PDZ domain). Interacts with GRIP1 and GRIP2. It depends on Zn(2+) as a cofactor. Requires Ca(2+) as cofactor. Post-translationally, cleaved by a furin endopeptidase in the trans-Golgi network. As to expression, predominantly expressed in brain, kidney, pancreas and lung. Overexpressed in a series of brain tumors, including astrocytomas and glioblastomas.

The protein resides in the cell membrane. It localises to the golgi apparatus. It is found in the trans-Golgi network membrane. Its subcellular location is the secreted. The protein localises to the extracellular space. The protein resides in the extracellular matrix. Its function is as follows. Metalloprotease that mediates cleavage of N-cadherin (CDH2) and acts as a regulator of neuro-immune interactions and neural stem cell quiescence. Involved in cell-cell interactions between nociceptive neurites and mast cells, possibly by mediating cleavage of CDH2, thereby acting as a mediator of peripheral thermal nociception and inflammatory hyperalgesia. Key regulator of neural stem cells quiescence by mediating cleavage of CDH2, affecting CDH2-mediated anchorage of neural stem cells to ependymocytes in the adult subependymal zone, leading to modulate their quiescence. May play a role in axonal growth. Able to activate progelatinase A. May also be a proteoglycanase involved in degradation of proteoglycans, such as dermatan sulfate and chondroitin sulfate proteoglycans. Cleaves partially fibronectin, but not collagen type I, nor laminin. The protein is Matrix metalloproteinase-24 (MMP24) of Homo sapiens (Human).